The primary structure comprises 326 residues: DNA-directed RNA polymerase subunit alpha (326 aa).

The interval 1-232 (MQGSARNFLK…EQLSSFVELE (232 aa)) is alpha N-terminal domain (alpha-NTD). Residues 246–326 (FDPQLLAAVD…NWPPVDLMSE (81 aa)) form an alpha C-terminal domain (alpha-CTD) region.

Belongs to the RNA polymerase alpha chain family. In terms of assembly, homodimer. The RNAP catalytic core consists of 2 alpha, 1 beta, 1 beta' and 1 omega subunit. When a sigma factor is associated with the core the holoenzyme is formed, which can initiate transcription.

The catalysed reaction is RNA(n) + a ribonucleoside 5'-triphosphate = RNA(n+1) + diphosphate. In terms of biological role, DNA-dependent RNA polymerase catalyzes the transcription of DNA into RNA using the four ribonucleoside triphosphates as substrates. This Ruthia magnifica subsp. Calyptogena magnifica protein is DNA-directed RNA polymerase subunit alpha.